A 97-amino-acid chain; its full sequence is ESAT-6-like protein EsxS (97 aa).

Belongs to the WXG100 family. CFP-10 subfamily. In terms of assembly, forms a tight complex with EsxR. Exists in heterodimeric and heterotetrameric forms.

The protein resides in the secreted. This chain is ESAT-6-like protein EsxS, found in Mycobacterium tuberculosis (strain ATCC 25618 / H37Rv).